Consider the following 938-residue polypeptide: Isoleucine--tRNA ligase (938 aa).

A 'HIGH' region motif is present at residues 65-75; that stretch reads PYANGSIHIGH. E568 serves as a coordination point for L-isoleucyl-5'-AMP. Positions 609–613 match the 'KMSKS' region motif; the sequence is KMSKS. ATP is bound at residue K612. The Zn(2+) site is built by C905, C908, C921, and C924.

It belongs to the class-I aminoacyl-tRNA synthetase family. IleS type 1 subfamily. Monomer. Zn(2+) is required as a cofactor.

The protein localises to the cytoplasm. It catalyses the reaction tRNA(Ile) + L-isoleucine + ATP = L-isoleucyl-tRNA(Ile) + AMP + diphosphate. Functionally, catalyzes the attachment of isoleucine to tRNA(Ile). As IleRS can inadvertently accommodate and process structurally similar amino acids such as valine, to avoid such errors it has two additional distinct tRNA(Ile)-dependent editing activities. One activity is designated as 'pretransfer' editing and involves the hydrolysis of activated Val-AMP. The other activity is designated 'posttransfer' editing and involves deacylation of mischarged Val-tRNA(Ile). The protein is Isoleucine--tRNA ligase of Mannheimia succiniciproducens (strain KCTC 0769BP / MBEL55E).